Here is a 580-residue protein sequence, read N- to C-terminus: Malto-oligosyltrehalose trehalohydrolase (580 aa).

A disordered region spans residues 56-88; it reads LPDPRSARQPDGVHARSQRWEPPGQFGAARTDT. Positions 60 to 69 are enriched in basic and acidic residues; that stretch reads RSARQPDGVH. 245-250 is a binding site for substrate; the sequence is RLDAVH. The Nucleophile role is filled by D247. E284 functions as the Proton donor in the catalytic mechanism. Substrate is bound by residues 309-313 and 379-384; these read DDIHH and HDQVGN.

It belongs to the glycosyl hydrolase 13 family.

Its subcellular location is the cytoplasm. It catalyses the reaction hydrolysis of (1-&gt;4)-alpha-D-glucosidic linkage in 4-alpha-D-[(1-&gt;4)-alpha-D-glucanosyl]n trehalose to yield trehalose and (1-&gt;4)-alpha-D-glucan.. It functions in the pathway glycan biosynthesis; trehalose biosynthesis. Is involved in the biosynthesis of trehalose but not in that of capsular glucan and glycogen. This Mycobacterium tuberculosis (strain CDC 1551 / Oshkosh) protein is Malto-oligosyltrehalose trehalohydrolase (treZ).